The sequence spans 146 residues: Snaclec coagulation factor IX/factor X-binding protein subunit B2 (146 aa).

Positions 1–23 (MGRLIFVSFGLLVVFLSLSGTAA) are cleaved as a signal peptide. Cystine bridges form between C25–C36, C53–C142, and C119–C134. A C-type lectin domain is found at 32–143 (YEGHCYKPFN…CRMMANFVCE (112 aa)).

It belongs to the snaclec family. Heterodimer of subunits A and B2; disulfide-linked. Expressed by the venom gland.

It is found in the secreted. In terms of biological role, anticoagulant protein which binds to the gamma-carboxyglutamic acid-domain regions of factors IX (F9) and factor X (F10) in the presence of calcium with a 1 to 1 stoichiometry. This chain is Snaclec coagulation factor IX/factor X-binding protein subunit B2, found in Trimeresurus stejnegeri (Chinese green tree viper).